A 115-amino-acid polypeptide reads, in one-letter code: MIVGYLLVVLVSLLTCGGQLCQKQAALSWQLPPEVRRGVTLRWLALAVLLLGLGMAVWLNVLQRLPLSLAYPTLSLNFVLVTLAARWLFNEPTTARHWYGVASIMLGILLMSINP.

Transmembrane regions (helical) follow at residues 1–21 (MIVG…GQLC), 43–63 (WLAL…NVLQ), 65–85 (LPLS…TLAA), and 93–113 (TTAR…LMSI). An EamA domain is found at 44-113 (LALAVLLLGL…IMLGILLMSI (70 aa)).

The protein belongs to the ArnE family. In terms of assembly, heterodimer of ArnE and ArnF.

It is found in the cell inner membrane. It participates in bacterial outer membrane biogenesis; lipopolysaccharide biosynthesis. Functionally, translocates 4-amino-4-deoxy-L-arabinose-phosphoundecaprenol (alpha-L-Ara4N-phosphoundecaprenol) from the cytoplasmic to the periplasmic side of the inner membrane. In Serratia proteamaculans (strain 568), this protein is Probable 4-amino-4-deoxy-L-arabinose-phosphoundecaprenol flippase subunit ArnE.